The sequence spans 322 residues: MIFRLGDFRFPDDPARLYPDTPDRPWVLEIGFGDGRFWPHYARTFPEPPNYLGVEISGVSLLKAHRRLKDAGLTNAVLTKLPAEVLVAQVIPHGSLDAIIVNFPDPWPKAGHEDHRLLRVPFFQVAASRLKPGGAALLTTDHDEYFEFACAQAEASGVMRVERVGPPPAALETKYAQKWRDLGLGVNHARFVPTRHDPVPNGTFAPYSEEDPAVPHAVLTLPADFSPQHFDKLTVRGKTWTVVLLDLYATLRRGGWVALAHVVEGDLTQEVLVGITEREDGTHLVRLAKFGGPIITPGVKAAVGAVTEWLEGQGAVVKHRGY.

3 residues coordinate S-adenosyl-L-methionine: Glu29, Glu55, and Asp105. Asp105 is a catalytic residue. 2 residues coordinate substrate: Lys109 and Asp141.

This sequence belongs to the class I-like SAM-binding methyltransferase superfamily. TrmB family.

The enzyme catalyses guanosine(46) in tRNA + S-adenosyl-L-methionine = N(7)-methylguanosine(46) in tRNA + S-adenosyl-L-homocysteine. Its pathway is tRNA modification; N(7)-methylguanine-tRNA biosynthesis. Catalyzes the formation of N(7)-methylguanine at position 46 (m7G46) in tRNA. This Deinococcus radiodurans (strain ATCC 13939 / DSM 20539 / JCM 16871 / CCUG 27074 / LMG 4051 / NBRC 15346 / NCIMB 9279 / VKM B-1422 / R1) protein is tRNA (guanine-N(7)-)-methyltransferase.